A 209-amino-acid chain; its full sequence is Large ribosomal subunit protein uL3 (209 aa).

Glutamine 150 bears the N5-methylglutamine mark.

The protein belongs to the universal ribosomal protein uL3 family. As to quaternary structure, part of the 50S ribosomal subunit. Forms a cluster with proteins L14 and L19. Methylated by PrmB.

Functionally, one of the primary rRNA binding proteins, it binds directly near the 3'-end of the 23S rRNA, where it nucleates assembly of the 50S subunit. The chain is Large ribosomal subunit protein uL3 from Citrobacter koseri (strain ATCC BAA-895 / CDC 4225-83 / SGSC4696).